Here is a 658-residue protein sequence, read N- to C-terminus: Putative arrestin-related trafficking adapter C2D10.04 (658 aa).

Disordered stretches follow at residues 21-107 and 638-658; these read LHHQ…LTWS and REEA…EIPR. Positions 39–81 are enriched in low complexity; it reads NRSSNSGLNRRNSVFGLPSSGLSSRLSKPSLSSINNSNNSSSN. Positions 96–107 are enriched in polar residues; that stretch reads RNMSNKPPLTWS. The residue at position 653 (serine 653) is a Phosphoserine.

This sequence belongs to the ALY1 family.

Its subcellular location is the cytoplasm. Its function is as follows. May regulate endocytosis in response to extracellular stimuli. This is Putative arrestin-related trafficking adapter C2D10.04 from Schizosaccharomyces pombe (strain 972 / ATCC 24843) (Fission yeast).